The following is an 837-amino-acid chain: V-type proton ATPase 116 kDa subunit a 1 (837 aa).

Residues 1–388 (MGELFRSEEM…DAYGIGSYRE (388 aa)) lie on the Cytoplasmic side of the membrane. The chain crosses the membrane as a helical span at residues 389 to 407 (INPAPYTIITFPFLFAVMF). Over 408–409 (GD) the chain is Vacuolar. The helical transmembrane segment at 410–426 (FGHGILMTLFAVWMVVR) threads the bilayer. Residues 427–441 (ESRILSQKIDNELFT) lie on the Cytoplasmic side of the membrane. The chain crosses the membrane as a helical span at residues 442–471 (MMFSGRYIILLMGLFSIYTGLIYNDCFSKA). At 472–534 (LNLFGSSWSV…ATNKLTFLNS (63 aa)) the chain is on the vacuolar side. Residues 535 to 554 (FKMKMSVVLGIIHMTFGVAL) form a helical membrane-spanning segment. The Cytoplasmic portion of the chain corresponds to 555–572 (SLLNHIYFKKPLNIYLGF). A helical transmembrane segment spans residues 573-593 (IPEMIFMTTLFGYLVILIIYK). Residues 594 to 638 (WCAYDASTSMVAPSLLIHFINMFLFSYQDTSLPMLYKGQMGLQCF) are Vacuolar-facing. Residues 639 to 658 (LVVCAIICVPWMLVVKPLIL) traverse the membrane as a helical segment. Residues 659-724 (RRQYLRRKHL…DTVVHQAIHT (66 aa)) are Cytoplasmic-facing. The chain crosses the membrane as a helical span at residues 725 to 749 (IEYCLGCISNTASYLRLWALSLAHA). Over 750-770 (QLSEVLWTMVMHVGLSIRSLG) the chain is Vacuolar. The chain crosses the membrane as a helical span at residues 771-809 (GGIALVFVFSAFATLTIAILLIMEGLSAFLHALRLHWVE). Residues 810–837 (FQNKFYMGTGFKFLPFSFENIREGKFDE) lie on the Cytoplasmic side of the membrane.

The protein belongs to the V-ATPase 116 kDa subunit family. In terms of assembly, V-ATPase is a heteromultimeric enzyme made up of two complexes: the ATP-hydrolytic V1 complex and the proton translocation V0 complex. The V1 complex consists of three catalytic AB heterodimers that form a heterohexamer, three peripheral stalks each consisting of EG heterodimers, one central rotor including subunits D and F, and the regulatory subunits C and H. The proton translocation complex V0 consists of the proton transport subunit a, a ring of proteolipid subunits c9c'', rotary subunit d, subunits e and f, and two accessory subunits.

The protein localises to the cytoplasmic vesicle. The protein resides in the clathrin-coated vesicle membrane. It is found in the secretory vesicle. It localises to the synaptic vesicle membrane. Its subcellular location is the melanosome. Subunit of the V0 complex of vacuolar(H+)-ATPase (V-ATPase), a multisubunit enzyme composed of a peripheral complex (V1) that hydrolyzes ATP and a membrane integral complex (V0) that translocates protons. V-ATPase is responsible for acidifying and maintaining the pH of intracellular compartments and in some cell types, is targeted to the plasma membrane, where it is responsible for acidifying the extracellular environment. Required for assembly and activity of the vacuolar ATPase. The chain is V-type proton ATPase 116 kDa subunit a 1 (atp6v0a1) from Xenopus tropicalis (Western clawed frog).